A 588-amino-acid chain; its full sequence is Dual specificity tyrosine-phosphorylation-regulated kinase 3 (588 aa).

The segment at 1-188 (MGGTARGPGR…HGVIGGPNNG (188 aa)) is disordered. Residues 97-134 (SNTIQSDGISDSEKCSPTVSQGKSSDCLNTVKSNSSSK) show a composition bias toward polar residues. The 314-residue stretch at 209–522 (YEVLKIIGKG…PAQALRHPWI (314 aa)) folds into the Protein kinase domain. Residues 215-223 (IGKGSFGQV), lysine 238, and 288-291 (FELL) contribute to the ATP site. Aspartate 335 (proton acceptor) is an active-site residue. A Phosphoserine modification is found at serine 350. Tyrosine 369 is modified (phosphotyrosine). Residues 468-481 (RSRRGKKRGPPGSK) carry the Nuclear localization signal motif.

The protein belongs to the protein kinase superfamily. CMGC Ser/Thr protein kinase family. MNB/DYRK subfamily. In terms of assembly, interacts with SIRT1. Requires Mg(2+) as cofactor. In terms of processing, ubiquitinated at anaphase by the anaphase-promoting complex (APC/C), leading to its degradation by the proteasome. Protein kinase activity is activated following autophosphorylation at Tyr-369. Autophosphorylation at Ser-350 stabilizes the protein and enhances the protein kinase activity. Isoform 1: Highly expressed in testis and in hematopoietic tissue such as fetal liver, and bone marrow. Isoform 1: Predominant form in fetal liver and bone marrow. Isoform 1: Present at low levels in heart, pancreas, lymph node and thymus. Isoform 2: Highly expressed in testis and in hematopoietic tissue such as fetal liver, and bone marrow. Isoform 2: Predominant form in testis. Isoform 2: Present at low levels in heart, pancreas, lymph node and thymus.

Its subcellular location is the nucleus. The protein resides in the cytoplasm. It is found in the nucleus speckle. The protein localises to the cytoplasmic granule. It localises to the cytoskeleton. Its subcellular location is the microtubule organizing center. The protein resides in the centrosome. It catalyses the reaction L-seryl-[protein] + ATP = O-phospho-L-seryl-[protein] + ADP + H(+). The enzyme catalyses L-threonyl-[protein] + ATP = O-phospho-L-threonyl-[protein] + ADP + H(+). The catalysed reaction is L-tyrosyl-[protein] + ATP = O-phospho-L-tyrosyl-[protein] + ADP + H(+). With respect to regulation, protein kinase activity is activated following autophosphorylation at Tyr-369. Inhibited by harmine, an ATP competitive inhibitor. Inhibited by small-compound GSK-626616. Functionally, dual-specificity protein kinase that promotes disassembly of several types of membraneless organelles during mitosis, such as stress granules, nuclear speckles and pericentriolar material. Dual-specificity tyrosine-regulated kinases (DYRKs) autophosphorylate a critical tyrosine residue in their activation loop and phosphorylate their substrate on serine and threonine residues. Acts as a central dissolvase of membraneless organelles during the G2-to-M transition, after the nuclear-envelope breakdown: acts by mediating phosphorylation of multiple serine and threonine residues in unstructured domains of proteins, such as SRRM1 and PCM1. Does not mediate disassembly of all membraneless organelles: disassembly of P-body and nucleolus is not regulated by DYRK3. Dissolution of membraneless organelles at the onset of mitosis is also required to release mitotic regulators, such as ZNF207, from liquid-unmixed organelles where they are sequestered and keep them dissolved during mitosis. Regulates mTORC1 by mediating the dissolution of stress granules: during stressful conditions, DYRK3 partitions from the cytosol to the stress granule, together with mTORC1 components, which prevents mTORC1 signaling. When stress signals are gone, the kinase activity of DYRK3 is required for the dissolution of stress granule and mTORC1 relocation to the cytosol: acts by mediating the phosphorylation of the mTORC1 inhibitor AKT1S1, allowing full reactivation of mTORC1 signaling. Also acts as a negative regulator of EPO-dependent erythropoiesis: may place an upper limit on red cell production during stress erythropoiesis. Inhibits cell death due to cytokine withdrawal in hematopoietic progenitor cells. Promotes cell survival upon genotoxic stress through phosphorylation of SIRT1: this in turn inhibits p53/TP53 activity and apoptosis. This chain is Dual specificity tyrosine-phosphorylation-regulated kinase 3, found in Homo sapiens (Human).